The following is a 471-amino-acid chain: Trigger factor (471 aa).

Residues 166–245 enclose the PPIase FKBP-type domain; it reads DDFITIDINA…LTAVKVRELP (80 aa). The tract at residues 442-471 is disordered; that stretch reads AAGVTGEDDDTEAEEERVTVSADDPGAARF. The span at 447–456 shows a compositional bias: acidic residues; that stretch reads GEDDDTEAEE.

It belongs to the FKBP-type PPIase family. Tig subfamily.

It is found in the cytoplasm. It carries out the reaction [protein]-peptidylproline (omega=180) = [protein]-peptidylproline (omega=0). Functionally, involved in protein export. Acts as a chaperone by maintaining the newly synthesized protein in an open conformation. Functions as a peptidyl-prolyl cis-trans isomerase. The protein is Trigger factor of Renibacterium salmoninarum (strain ATCC 33209 / DSM 20767 / JCM 11484 / NBRC 15589 / NCIMB 2235).